A 251-amino-acid polypeptide reads, in one-letter code: Cell division protein ZapD (251 aa).

This sequence belongs to the ZapD family. Interacts with FtsZ.

Its subcellular location is the cytoplasm. In terms of biological role, cell division factor that enhances FtsZ-ring assembly. Directly interacts with FtsZ and promotes bundling of FtsZ protofilaments, with a reduction in FtsZ GTPase activity. This is Cell division protein ZapD from Paraburkholderia xenovorans (strain LB400).